The sequence spans 342 residues: Glycerol-3-phosphate dehydrogenase [NAD(P)+] (342 aa).

3 residues coordinate NADPH: tryptophan 11, arginine 33, and lysine 107. Sn-glycerol 3-phosphate is bound by residues lysine 107, glycine 143, and serine 145. Alanine 147 contributes to the NADPH binding site. The sn-glycerol 3-phosphate site is built by lysine 198, aspartate 251, serine 261, arginine 262, and asparagine 263. Residue lysine 198 is the Proton acceptor of the active site. Position 262 (arginine 262) interacts with NADPH. NADPH is bound by residues valine 286 and glutamate 288.

It belongs to the NAD-dependent glycerol-3-phosphate dehydrogenase family.

It localises to the cytoplasm. The enzyme catalyses sn-glycerol 3-phosphate + NAD(+) = dihydroxyacetone phosphate + NADH + H(+). It catalyses the reaction sn-glycerol 3-phosphate + NADP(+) = dihydroxyacetone phosphate + NADPH + H(+). Its pathway is membrane lipid metabolism; glycerophospholipid metabolism. Catalyzes the reduction of the glycolytic intermediate dihydroxyacetone phosphate (DHAP) to sn-glycerol 3-phosphate (G3P), the key precursor for phospholipid synthesis. This Paracidovorax citrulli (strain AAC00-1) (Acidovorax citrulli) protein is Glycerol-3-phosphate dehydrogenase [NAD(P)+].